Consider the following 342-residue polypeptide: Probable dual-specificity RNA methyltransferase RlmN (342 aa).

Residue Glu-91 is the Proton acceptor of the active site. Residues 97–327 enclose the Radical SAM core domain; that stretch reads YRYGNTVCLS…VTVRRELGDE (231 aa). Cys-104 and Cys-332 are disulfide-bonded. [4Fe-4S] cluster is bound by residues Cys-111, Cys-115, and Cys-118. Residues 158-159, Ser-190, 213-215, and Asn-289 each bind S-adenosyl-L-methionine; these read GE and SLH. Cys-332 acts as the S-methylcysteine intermediate in catalysis.

It belongs to the radical SAM superfamily. RlmN family. The cofactor is [4Fe-4S] cluster.

The protein resides in the cytoplasm. The catalysed reaction is adenosine(2503) in 23S rRNA + 2 reduced [2Fe-2S]-[ferredoxin] + 2 S-adenosyl-L-methionine = 2-methyladenosine(2503) in 23S rRNA + 5'-deoxyadenosine + L-methionine + 2 oxidized [2Fe-2S]-[ferredoxin] + S-adenosyl-L-homocysteine. The enzyme catalyses adenosine(37) in tRNA + 2 reduced [2Fe-2S]-[ferredoxin] + 2 S-adenosyl-L-methionine = 2-methyladenosine(37) in tRNA + 5'-deoxyadenosine + L-methionine + 2 oxidized [2Fe-2S]-[ferredoxin] + S-adenosyl-L-homocysteine. Specifically methylates position 2 of adenine 2503 in 23S rRNA and position 2 of adenine 37 in tRNAs. The protein is Probable dual-specificity RNA methyltransferase RlmN of Carboxydothermus hydrogenoformans (strain ATCC BAA-161 / DSM 6008 / Z-2901).